The sequence spans 693 residues: Periplasmic alpha-galactoside-binding protein (693 aa).

The N-terminal stretch at 1 to 20 (MKTHRLNMTASLLIGISAFA) is a signal peptide.

The protein belongs to the bacterial solute-binding protein 5 family.

Its subcellular location is the periplasm. Its function is as follows. Involved in the transport of alpha-galactosides. Required for the utilization of raffinose and melibiose. Probably acts as a periplasmic substrate-binding protein for a transport system. This Rhizobium meliloti (strain 1021) (Ensifer meliloti) protein is Periplasmic alpha-galactoside-binding protein.